We begin with the raw amino-acid sequence, 601 residues long: Chaperone protein DnaK (601 aa).

A Phosphothreonine; by autocatalysis modification is found at Thr175. Positions 570 to 601 (FAQKAASKETSKNEQNEDGSIDAEIKEEDPKA) are disordered. The segment covering 575–584 (ASKETSKNEQ) has biased composition (basic and acidic residues). Over residues 585–601 (NEDGSIDAEIKEEDPKA) the composition is skewed to acidic residues.

The protein belongs to the heat shock protein 70 family.

Functionally, acts as a chaperone. The polypeptide is Chaperone protein DnaK (Mycoplasma mobile (strain ATCC 43663 / 163K / NCTC 11711) (Mesomycoplasma mobile)).